The primary structure comprises 428 residues: Kynureninase (428 aa).

Pyridoxal 5'-phosphate is bound by residues T104, T105, 132–135, D213, H216, and Y238; that span reads FPSD. K239 bears the N6-(pyridoxal phosphate)lysine mark. Pyridoxal 5'-phosphate is bound by residues W267 and T295.

It belongs to the kynureninase family. In terms of assembly, homodimer. Pyridoxal 5'-phosphate serves as cofactor.

It carries out the reaction L-kynurenine + H2O = anthranilate + L-alanine + H(+). The catalysed reaction is 3-hydroxy-L-kynurenine + H2O = 3-hydroxyanthranilate + L-alanine + H(+). It functions in the pathway amino-acid degradation; L-kynurenine degradation; L-alanine and anthranilate from L-kynurenine: step 1/1. Its pathway is cofactor biosynthesis; NAD(+) biosynthesis; quinolinate from L-kynurenine: step 2/3. Catalyzes the cleavage of L-kynurenine (L-Kyn) and L-3-hydroxykynurenine (L-3OHKyn) into anthranilic acid (AA) and 3-hydroxyanthranilic acid (3-OHAA), respectively. This is Kynureninase from Bacillus mycoides (strain KBAB4) (Bacillus weihenstephanensis).